A 187-amino-acid chain; its full sequence is Small ribosomal subunit protein uS7 (187 aa).

It belongs to the universal ribosomal protein uS7 family. As to quaternary structure, part of the 30S ribosomal subunit.

Its function is as follows. One of the primary rRNA binding proteins, it binds directly to 16S rRNA where it nucleates assembly of the head domain of the 30S subunit. Is located at the subunit interface close to the decoding center. The sequence is that of Small ribosomal subunit protein uS7 from Picrophilus torridus (strain ATCC 700027 / DSM 9790 / JCM 10055 / NBRC 100828 / KAW 2/3).